The chain runs to 156 residues: Cyanate hydratase (156 aa).

Residues Arg96, Glu99, and Ser122 contribute to the active site.

It belongs to the cyanase family.

It catalyses the reaction cyanate + hydrogencarbonate + 3 H(+) = NH4(+) + 2 CO2. Functionally, catalyzes the reaction of cyanate with bicarbonate to produce ammonia and carbon dioxide. The polypeptide is Cyanate hydratase (Pseudomonas aeruginosa (strain LESB58)).